We begin with the raw amino-acid sequence, 51 residues long: Large ribosomal subunit protein eL39 (51 aa).

This sequence belongs to the eukaryotic ribosomal protein eL39 family.

This Thermococcus onnurineus (strain NA1) protein is Large ribosomal subunit protein eL39.